An 807-amino-acid chain; its full sequence is Probable phosphoketolase (807 aa).

It belongs to the XFP family. Requires thiamine diphosphate as cofactor.

In Mesorhizobium japonicum (strain LMG 29417 / CECT 9101 / MAFF 303099) (Mesorhizobium loti (strain MAFF 303099)), this protein is Probable phosphoketolase.